The sequence spans 146 residues: Putative calcium-binding protein CML19 (146 aa).

EF-hand domains follow at residues 3 to 38 (AATA…ALGE), 40 to 75 (MSAE…LEMG), 79 to 114 (ERCR…LGSH), and 115 to 146 (QGIE…MMDA). 9 residues coordinate Ca(2+): D16, D18, D20, K22, E27, D53, D55, D57, and E64. Ca(2+) is bound by residues D128, D130, D132, and E139.

Its function is as follows. Potential calcium sensor. In Oryza sativa subsp. japonica (Rice), this protein is Putative calcium-binding protein CML19 (CML19).